The sequence spans 353 residues: Photosystem II D2 protein (353 aa).

Thr-2 is modified (N-acetylthreonine). Thr-2 is modified (phosphothreonine). A helical membrane pass occupies residues 41–61 (CAYFAVGGWFTGTTFVTSWYT). His-118 contacts chlorophyll a. Residues 125 to 141 (GFMLRQFELARSVQLRP) traverse the membrane as a helical segment. Residues Gln-130 and Asn-143 each coordinate pheophytin a. Residues 153 to 166 (VFVSVFLIYPLGQS) traverse the membrane as a helical segment. His-198 is a binding site for chlorophyll a. The chain crosses the membrane as a helical span at residues 208-228 (AALLCAIHGATVENTLFEDGD). Positions 215 and 262 each coordinate a plastoquinone. Residue His-215 coordinates Fe cation. His-269 contributes to the Fe cation binding site. A helical membrane pass occupies residues 279 to 295 (GLWMSALGVVGLALNLR).

It belongs to the reaction center PufL/M/PsbA/D family. As to quaternary structure, PSII is composed of 1 copy each of membrane proteins PsbA, PsbB, PsbC, PsbD, PsbE, PsbF, PsbH, PsbI, PsbJ, PsbK, PsbL, PsbM, PsbT, PsbX, PsbY, PsbZ, Psb30/Ycf12, at least 3 peripheral proteins of the oxygen-evolving complex and a large number of cofactors. It forms dimeric complexes. The cofactor is The D1/D2 heterodimer binds P680, chlorophylls that are the primary electron donor of PSII, and subsequent electron acceptors. It shares a non-heme iron and each subunit binds pheophytin, quinone, additional chlorophylls, carotenoids and lipids. There is also a Cl(-1) ion associated with D1 and D2, which is required for oxygen evolution. The PSII complex binds additional chlorophylls, carotenoids and specific lipids..

The protein resides in the plastid. It is found in the chloroplast thylakoid membrane. The catalysed reaction is 2 a plastoquinone + 4 hnu + 2 H2O = 2 a plastoquinol + O2. In terms of biological role, photosystem II (PSII) is a light-driven water:plastoquinone oxidoreductase that uses light energy to abstract electrons from H(2)O, generating O(2) and a proton gradient subsequently used for ATP formation. It consists of a core antenna complex that captures photons, and an electron transfer chain that converts photonic excitation into a charge separation. The D1/D2 (PsbA/PsbD) reaction center heterodimer binds P680, the primary electron donor of PSII as well as several subsequent electron acceptors. D2 is needed for assembly of a stable PSII complex. This chain is Photosystem II D2 protein, found in Jasminum nudiflorum (Winter jasmine).